The primary structure comprises 242 residues: Probable transcriptional regulatory protein mhp472 (242 aa).

This sequence belongs to the TACO1 family.

It is found in the cytoplasm. In Mesomycoplasma hyopneumoniae (strain 232) (Mycoplasma hyopneumoniae), this protein is Probable transcriptional regulatory protein mhp472.